We begin with the raw amino-acid sequence, 164 residues long: HTH-type transcriptional regulator IscR (164 aa).

The region spanning 2–131 (RLTSKGRYAV…GSISLEELVK (130 aa)) is the HTH rrf2-type domain. Positions 28–51 (LADISERQGISLSYLEQLFSRLRK) form a DNA-binding region, H-T-H motif. Residues Cys-92, Cys-98, and Cys-104 each contribute to the [2Fe-2S] cluster site. The interval 140–164 (DRQDSDKRRTPNGRPQETINVNLRA) is disordered. A compositionally biased stretch (polar residues) spans 152 to 164 (GRPQETINVNLRA).

It depends on [2Fe-2S] cluster as a cofactor.

Functionally, regulates the transcription of several operons and genes involved in the biogenesis of Fe-S clusters and Fe-S-containing proteins. This Xenorhabdus nematophila (strain ATCC 19061 / DSM 3370 / CCUG 14189 / LMG 1036 / NCIMB 9965 / AN6) protein is HTH-type transcriptional regulator IscR.